The chain runs to 264 residues: tRNA (guanine-N(1)-)-methyltransferase (264 aa).

Residues Gly125 and 145–150 (LGDFVL) contribute to the S-adenosyl-L-methionine site.

It belongs to the RNA methyltransferase TrmD family. In terms of assembly, homodimer.

The protein resides in the cytoplasm. The enzyme catalyses guanosine(37) in tRNA + S-adenosyl-L-methionine = N(1)-methylguanosine(37) in tRNA + S-adenosyl-L-homocysteine + H(+). Its function is as follows. Specifically methylates guanosine-37 in various tRNAs. In Burkholderia cenocepacia (strain HI2424), this protein is tRNA (guanine-N(1)-)-methyltransferase.